A 312-amino-acid polypeptide reads, in one-letter code: Protoheme IX farnesyltransferase (312 aa).

8 helical membrane passes run 12-32, 41-61, 93-113, 114-134, 141-161, 168-188, 240-260, and 290-310; these read LALTKPRVIELLLVATIPAML, FGLILLTLIGGWMGAGAANTF, VFAWVLLIASVLWLGFLCHSW, LAAGFIVLTNWFYVFVYTKWL, NVIWGGAAGCMPVIVGWAVIT, FHAGWSSWLQAIILFMIIFFW, VPAASWIYLAAALISGGWFII, and ILFVALSVDAVLGWQTLAHAV.

This sequence belongs to the UbiA prenyltransferase family. Protoheme IX farnesyltransferase subfamily.

The protein resides in the cell membrane. The enzyme catalyses heme b + (2E,6E)-farnesyl diphosphate + H2O = Fe(II)-heme o + diphosphate. It participates in porphyrin-containing compound metabolism; heme O biosynthesis; heme O from protoheme: step 1/1. Its function is as follows. Converts heme B (protoheme IX) to heme O by substitution of the vinyl group on carbon 2 of heme B porphyrin ring with a hydroxyethyl farnesyl side group. The sequence is that of Protoheme IX farnesyltransferase from Corynebacterium jeikeium (strain K411).